The chain runs to 614 residues: tRNA uridine 5-carboxymethylaminomethyl modification enzyme MnmG (614 aa).

10-15 (GAGHAG) lines the FAD pocket. 271–285 (GPRYCPSIEDKIVKF) is an NAD(+) binding site.

Belongs to the MnmG family. In terms of assembly, homodimer. Heterotetramer of two MnmE and two MnmG subunits. Requires FAD as cofactor.

Its subcellular location is the cytoplasm. In terms of biological role, NAD-binding protein involved in the addition of a carboxymethylaminomethyl (cmnm) group at the wobble position (U34) of certain tRNAs, forming tRNA-cmnm(5)s(2)U34. This Ureaplasma parvum serovar 3 (strain ATCC 27815 / 27 / NCTC 11736) protein is tRNA uridine 5-carboxymethylaminomethyl modification enzyme MnmG.